Reading from the N-terminus, the 395-residue chain is Succinyl-diaminopimelate desuccinylase (395 aa).

Residue histidine 81 coordinates Zn(2+). Aspartate 83 is a catalytic residue. Aspartate 114 contacts Zn(2+). Catalysis depends on glutamate 146, which acts as the Proton acceptor. Zn(2+)-binding residues include glutamate 147, glutamate 175, and histidine 364.

Belongs to the peptidase M20A family. DapE subfamily. Homodimer. The cofactor is Zn(2+). Requires Co(2+) as cofactor.

It carries out the reaction N-succinyl-(2S,6S)-2,6-diaminopimelate + H2O = (2S,6S)-2,6-diaminopimelate + succinate. The protein operates within amino-acid biosynthesis; L-lysine biosynthesis via DAP pathway; LL-2,6-diaminopimelate from (S)-tetrahydrodipicolinate (succinylase route): step 3/3. Functionally, catalyzes the hydrolysis of N-succinyl-L,L-diaminopimelic acid (SDAP), forming succinate and LL-2,6-diaminopimelate (DAP), an intermediate involved in the bacterial biosynthesis of lysine and meso-diaminopimelic acid, an essential component of bacterial cell walls. This Parvibaculum lavamentivorans (strain DS-1 / DSM 13023 / NCIMB 13966) protein is Succinyl-diaminopimelate desuccinylase.